The primary structure comprises 105 residues: Integration host factor (105 aa).

Residues L64–K71 carry the H2TH motif, binds DNA motif. The tract at residues A82–Q94 is lid, binds DNA.

The protein belongs to the actinobacterial IHF (aIHF) family. Binds DNA as a monomer. As to quaternary structure, (Microbial infection) Forms a complex with L5 Int and attP DNA. The complex binds attB to form products.

Its subcellular location is the cytoplasm. The protein resides in the nucleoid. Functionally, a nucleoid-associated protein (NAP) that binds DNA without any sequence specificity. Compacts DNA. Binds along the whole chromosome in a dynamic manner, has equal affinity for the oriC site, attB and a randon 62% GC-rich sequence. Plays a role in transcription regulation. (Microbial infection) Stimulates temperate Mycobacterium phage L5 Int-mediated recombination in vitro using supercoiled attP (phage attachment site) DNA, linear attB DNA (bacterial attachment site) and L5 integrase (L5 Int or Int-L5, AC P22884). mIHF acts on L5 Int to stimulate formation of a specific intasome complex. mIHF probably stabilizes a sharp bend in the DNA during phage integration. In Mycolicibacterium smegmatis (strain ATCC 700084 / mc(2)155) (Mycobacterium smegmatis), this protein is Integration host factor.